Consider the following 1166-residue polypeptide: Serine/threonine-protein kinase BRI1-like 1 (1166 aa).

An N-terminal signal peptide occupies residues M1–G21. The Extracellular segment spans residues I22–T776. Residue N33 is glycosylated (N-linked (GlcNAc...) asparagine). Positions C66–C73 match the Cys pair 1 motif. LRR repeat units follow at residues R78 to T99, N103 to D124, Y126 to F147, N152 to S173, S176 to S197, S202 to I224, N227 to P248, F252 to G274, N278 to L300, T303 to C325, W327 to K349, G352 to S375, N376 to S397, V403 to K424, S427 to L449, N451 to K473, N476 to C498, N500 to L522, K524 to K547, and S548 to Q570. N97 carries an N-linked (GlcNAc...) asparagine glycan. N157 is a glycosylation site (N-linked (GlcNAc...) asparagine). 4 N-linked (GlcNAc...) asparagine glycosylation sites follow: N212, N227, N237, and N257. 2 N-linked (GlcNAc...) asparagine glycosylation sites follow: N362 and N373. N451 and N461 each carry an N-linked (GlcNAc...) asparagine glycan. N521, N532, N558, and N638 each carry an N-linked (GlcNAc...) asparagine glycan. 3 LRR repeats span residues Y664–L686, A688–L710, and F712–T734. 2 N-linked (GlcNAc...) asparagine glycosylation sites follow: N722 and N743. The Cys pair 2 signature appears at C748–C755. A helical transmembrane segment spans residues A777–Y797. At R798 to P1166 the chain is on the cytoplasmic side. Residues T848 and T856 each carry the phosphothreonine modification. Residues F859–L1147 enclose the Protein kinase domain. ATP is bound by residues V865–V873 and K887. Y932 carries the post-translational modification Phosphotyrosine. Catalysis depends on D987, which acts as the Proton acceptor. At S1022 the chain carries Phosphoserine. Y1030 is subject to Phosphotyrosine. Position 1141 is a phosphothreonine (T1141). The disordered stretch occupies residues E1142 to P1166.

Belongs to the protein kinase superfamily. Ser/Thr protein kinase family. Predominantly expressed in vascular tissues. From 7 day old seedlings, it is expressed in the columella cells of the root tip, in the vascular initials in the meristematic region of the root and in vascular tissues. After germination, it is expressed in the stele cell and in the early differentiation zone of the root, where the expression continues from the root to the hypocotyls and cotyledons following the midvein. In mature plants, it is expressed in the vasculature of the leaf, predominantly in the midvein, and in the vascular bundles of inflorescence stems. Localizes to procambial cells of the vascular bundles located between the differentiating xylem and the phloem.

The protein resides in the cell membrane. The catalysed reaction is L-seryl-[protein] + ATP = O-phospho-L-seryl-[protein] + ADP + H(+). It catalyses the reaction L-threonyl-[protein] + ATP = O-phospho-L-threonyl-[protein] + ADP + H(+). Functionally, receptor with a serine/threonine-protein kinase activity. Regulates, in response to brassinosteroid binding, a signaling cascade involved in plant development. Binds brassinolide. May be involved in cell growth and vascular differentiation. The polypeptide is Serine/threonine-protein kinase BRI1-like 1 (BRL1) (Arabidopsis thaliana (Mouse-ear cress)).